A 409-amino-acid chain; its full sequence is Phosphoglycerate kinase (409 aa).

Residues Asp22–Asn24, Arg37, His60–Arg63, Arg122, and Arg164 each bind substrate. Residues Lys215, Glu338, and Gly365–Ser368 each bind ATP.

The protein belongs to the phosphoglycerate kinase family. Monomer.

The protein localises to the cytoplasm. The enzyme catalyses (2R)-3-phosphoglycerate + ATP = (2R)-3-phospho-glyceroyl phosphate + ADP. The protein operates within carbohydrate degradation; glycolysis; pyruvate from D-glyceraldehyde 3-phosphate: step 2/5. The sequence is that of Phosphoglycerate kinase (pgk) from Mycoplasma pneumoniae (strain ATCC 29342 / M129 / Subtype 1) (Mycoplasmoides pneumoniae).